The primary structure comprises 304 residues: Glutaminase (304 aa).

Residues S63, N114, E158, N165, Y189, Y240, and V258 each contribute to the substrate site.

The protein belongs to the glutaminase family. Homotetramer.

The enzyme catalyses L-glutamine + H2O = L-glutamate + NH4(+). The protein is Glutaminase of Shewanella putrefaciens (strain CN-32 / ATCC BAA-453).